We begin with the raw amino-acid sequence, 618 residues long: Neurosecretory protein VGF (618 aa).

Positions 1 to 23 (MKSLRLPATVLFCLLLLIKGLGA) are cleaved as a signal peptide. Disordered stretches follow at residues 23 to 46 (AAPPGHPEAQPPPPSSEHKEPVAG), 86 to 201 (VLLQ…LESP), and 219 to 262 (PERA…GEAL). The segment covering 26 to 37 (PGHPEAQPPPPS) has biased composition (pro residues). A compositionally biased stretch (low complexity) spans 180–195 (ETAAAETETRTHTLTR). A coiled-coil region spans residues 301-332 (LAQVEAGRRQAEATRQAAAQEERLADLASDLL). Glutamine 310 is subject to Pyrrolidone carboxylic acid. Positions 342-603 (RQRGLGGRGL…EAEERRLQEQ (262 aa)) are disordered. Over residues 356 to 378 (GGGRETARQQEEAEQERRGGEER) the composition is skewed to basic and acidic residues. The span at 379–395 (VGEEDEEAAEAEAEAEE) shows a compositional bias: acidic residues. Residues 416-434 (AEDKRSREETPGHRRKEAE) show a composition bias toward basic and acidic residues. At serine 421 the chain carries Phosphoserine. Threonine 425 bears the Phosphothreonine mark. Acidic residues predominate over residues 435–451 (GAEEGGAEDEDDDEEMD). A compositionally biased stretch (pro residues) spans 490-500 (PPEPVPPPRAA). Over residues 578 to 602 (HYPDREAQARRAQEEAEAEERRLQE) the composition is skewed to basic and acidic residues.

Multiple peptides are derived from VGF, with activities in synaptic plasticity, antidepression, penile erection, autonomic activation, and increases in energy expenditure.

The protein localises to the secreted. It localises to the cytoplasmic vesicle. Its subcellular location is the secretory vesicle. Functionally, secreted polyprotein that is packaged and proteolytically processed by prohormone convertases PCSK1 and PCSK2 in a cell-type-specific manner. VGF and peptides derived from its processing play many roles in neurogenesis and neuroplasticity associated with learning, memory, depression and chronic pain. Plays a role in the control of body fluid homeostasis by regulating vasopressin release. Suppresses presynaptic glutamatergic neurons connected to vasopressin neurons. In terms of biological role, plays a role in the control of body fluid homeostasis by regulating vasopressin release. Activates GABAergic interneurons which are inhibitory neurons of the nervous system and thereby suppresses presynaptic glutamatergic neurons. Also stimulates feeding behavior in an orexin-dependent manner in the hypothalamus. Functions as a positive regulator for the activation of orexin neurons resulting in elevated gastric acid secretion and gastric emptying. This chain is Neurosecretory protein VGF, found in Bos taurus (Bovine).